The primary structure comprises 382 residues: Mannitol-1-phosphate 5-dehydrogenase (382 aa).

3-14 contacts NAD(+); that stretch reads ALHFGAGNIGRG. Lys-269 is subject to N6-acetyllysine.

It belongs to the mannitol dehydrogenase family.

It carries out the reaction D-mannitol 1-phosphate + NAD(+) = beta-D-fructose 6-phosphate + NADH + H(+). This Escherichia coli O127:H6 (strain E2348/69 / EPEC) protein is Mannitol-1-phosphate 5-dehydrogenase.